We begin with the raw amino-acid sequence, 762 residues long: 5-methyltetrahydropteroyltriglutamate--homocysteine methyltransferase (762 aa).

Residues Arg-17–Lys-20 and Lys-111 each bind 5-methyltetrahydropteroyltri-L-glutamate. L-homocysteine-binding positions include Ile-435 to Ser-437 and Glu-488. Residues Ile-435–Ser-437 and Glu-488 each bind L-methionine. 5-methyltetrahydropteroyltri-L-glutamate contacts are provided by residues Arg-519–Cys-520 and Trp-565. Asp-603 serves as a coordination point for L-homocysteine. L-methionine is bound at residue Asp-603. 5-methyltetrahydropteroyltri-L-glutamate is bound at residue Glu-609. Zn(2+) is bound by residues His-645, Cys-647, and Glu-669. His-698 (proton donor) is an active-site residue. Residue Cys-730 coordinates Zn(2+).

It belongs to the vitamin-B12 independent methionine synthase family. Zn(2+) is required as a cofactor.

The catalysed reaction is 5-methyltetrahydropteroyltri-L-glutamate + L-homocysteine = tetrahydropteroyltri-L-glutamate + L-methionine. It functions in the pathway amino-acid biosynthesis; L-methionine biosynthesis via de novo pathway; L-methionine from L-homocysteine (MetE route): step 1/1. Functionally, catalyzes the transfer of a methyl group from 5-methyltetrahydrofolate to homocysteine resulting in methionine formation. The chain is 5-methyltetrahydropteroyltriglutamate--homocysteine methyltransferase from Bacillus cereus (strain ZK / E33L).